Reading from the N-terminus, the 534-residue chain is Chaperonin GroEL (534 aa).

ATP is bound by residues 29 to 32 (TAGP), 86 to 90 (DGTTT), glycine 413, and aspartate 494.

This sequence belongs to the chaperonin (HSP60) family. As to quaternary structure, forms a cylinder of 14 subunits composed of two heptameric rings stacked back-to-back. Interacts with the co-chaperonin GroES.

It is found in the cytoplasm. The catalysed reaction is ATP + H2O + a folded polypeptide = ADP + phosphate + an unfolded polypeptide.. Together with its co-chaperonin GroES, plays an essential role in assisting protein folding. The GroEL-GroES system forms a nano-cage that allows encapsulation of the non-native substrate proteins and provides a physical environment optimized to promote and accelerate protein folding. This chain is Chaperonin GroEL, found in Mycoplasmoides gallisepticum (strain R(low / passage 15 / clone 2)) (Mycoplasma gallisepticum).